The primary structure comprises 344 residues: Anthranilate phosphoribosyltransferase (344 aa).

Residues Gly84, 87–88, Thr92, 94–97, 112–120, and Ser124 each bind 5-phospho-alpha-D-ribose 1-diphosphate; these read GD, NIST, and KHGNRSVSS. Gly84 is an anthranilate binding site. Ser96 is a Mg(2+) binding site. Asn115 contacts anthranilate. An anthranilate-binding site is contributed by Arg170. Residues Asp229 and Glu230 each contribute to the Mg(2+) site.

This sequence belongs to the anthranilate phosphoribosyltransferase family. In terms of assembly, homodimer. Mg(2+) serves as cofactor.

It catalyses the reaction N-(5-phospho-beta-D-ribosyl)anthranilate + diphosphate = 5-phospho-alpha-D-ribose 1-diphosphate + anthranilate. Its pathway is amino-acid biosynthesis; L-tryptophan biosynthesis; L-tryptophan from chorismate: step 2/5. Functionally, catalyzes the transfer of the phosphoribosyl group of 5-phosphorylribose-1-pyrophosphate (PRPP) to anthranilate to yield N-(5'-phosphoribosyl)-anthranilate (PRA). The sequence is that of Anthranilate phosphoribosyltransferase from Xylella fastidiosa (strain M23).